Reading from the N-terminus, the 1785-residue chain is BCL-6 corepressor-like protein 1 (1785 aa).

3 disordered regions span residues 65-101 (VGSG…KMDY), 113-137 (VPLS…NSRA), and 343-368 (ASTP…GPPS). The segment covering 83-97 (KLGHKSEDKPDDPQP) has biased composition (basic and acidic residues). Phosphoserine is present on Ser496. Polar residues-rich tracts occupy residues 527-539 (PCTS…TTQP) and 586-600 (GTEQ…TFSP). Disordered regions lie at residues 527–550 (PCTS…PLAD) and 562–646 (PTPQ…PMPV). Ser599 and Ser613 each carry phosphoserine. A Glycyl lysine isopeptide (Lys-Gly) (interchain with G-Cter in SUMO2) cross-link involves residue Lys747. Disordered stretches follow at residues 753–781 (IIDQ…QPST), 876–901 (SSSE…EQDP), and 937–977 (VQPS…LKLA). Phosphoserine is present on residues Ser1029 and Ser1033. Residue Lys1092 forms a Glycyl lysine isopeptide (Lys-Gly) (interchain with G-Cter in SUMO2) linkage. Disordered stretches follow at residues 1107–1293 (PDDV…QGRR) and 1312–1487 (WDTN…PEAR). Phosphoserine is present on Ser1162. A compositionally biased stretch (basic residues) spans 1176–1185 (VRGKHKHRKP). The span at 1195–1213 (KRADSHEEGSLEKKAKSSF) shows a compositional bias: basic and acidic residues. Residues 1222–1234 (STRTRSQSGSICS) show a composition bias toward polar residues. Basic and acidic residues predominate over residues 1271-1284 (TQRDTQYRSHHAQD). Acidic residues predominate over residues 1314 to 1324 (TNEEEEEEEEE). The Nuclear localization signal motif lies at 1328–1336 (KRKKRRRQK). Positions 1328-1339 (KRKKRRRQKSRK) are enriched in basic residues. Residues 1352–1363 (EQRRKGRADLKA) show a composition bias toward basic and acidic residues. The span at 1440–1449 (WSQQKTRSPK) shows a compositional bias: polar residues. Residues 1461-1480 (TPSKSRSASSEEASESPTAR) show a composition bias toward low complexity. A Phosphoserine modification is found at Ser1476. ANK repeat units follow at residues 1529–1558 (AGYT…NVNC), 1562–1591 (DGTR…DPTL), and 1595–1623 (SGQT…QGRA). The PCGF Ub-like fold domain (PUFD); required for the interaction with the KDM2B-SKP1 heterodimeric complex stretch occupies residues 1668–1785 (DDFMFELSDK…SEVEFQSCNS (118 aa)).

It belongs to the BCOR family. In terms of assembly, interacts with PCGF1, forming heterodimers. The PCGF1-BCORL1 heterodimeric complex interacts with the KDM2B-SKP1 heterodimeric complex to form a homotetrameric polycomb repression complex 1 (PRC1.1). Interacts with SKP1. Interacts with CTBP1, HDAC4, HDAC5 and HDAC7. In terms of tissue distribution, detected in testis and prostate. Detected at lower levels in peripheral blood leukocytes and spleen. Mainly expressed in the spermatogonia and primary spermatocytes.

It is found in the nucleus. Its function is as follows. Transcriptional corepressor. May specifically inhibit gene expression when recruited to promoter regions by sequence-specific DNA-binding proteins such as BCL6. This repression may be mediated at least in part by histone deacetylase activities which can associate with this corepressor. The chain is BCL-6 corepressor-like protein 1 from Homo sapiens (Human).